The primary structure comprises 215 residues: Large ribosomal subunit protein uL3 (215 aa).

The tract at residues 136-155 (GVSISHRSHGSTGQRQDPGK) is disordered. Gln151 is subject to N5-methylglutamine.

This sequence belongs to the universal ribosomal protein uL3 family. In terms of assembly, part of the 50S ribosomal subunit. Forms a cluster with proteins L14 and L19. Methylated by PrmB.

Functionally, one of the primary rRNA binding proteins, it binds directly near the 3'-end of the 23S rRNA, where it nucleates assembly of the 50S subunit. This chain is Large ribosomal subunit protein uL3, found in Rickettsia rickettsii (strain Iowa).